Reading from the N-terminus, the 1388-residue chain is DNA-directed RNA polymerase subunit beta' (1388 aa).

Cys-65, Cys-67, Cys-80, and Cys-83 together coordinate Zn(2+). Positions 456, 458, and 460 each coordinate Mg(2+). The Zn(2+) site is built by Cys-812, Cys-887, Cys-894, and Cys-897.

The protein belongs to the RNA polymerase beta' chain family. As to quaternary structure, the RNAP catalytic core consists of 2 alpha, 1 beta, 1 beta' and 1 omega subunit. When a sigma factor is associated with the core the holoenzyme is formed, which can initiate transcription. Mg(2+) serves as cofactor. It depends on Zn(2+) as a cofactor.

The enzyme catalyses RNA(n) + a ribonucleoside 5'-triphosphate = RNA(n+1) + diphosphate. DNA-dependent RNA polymerase catalyzes the transcription of DNA into RNA using the four ribonucleoside triphosphates as substrates. The chain is DNA-directed RNA polymerase subunit beta' from Protochlamydia amoebophila (strain UWE25).